A 603-amino-acid chain; its full sequence is DNA mismatch repair protein MutL (603 aa).

The segment covering 336-346 (EVSKKQKEQQK) has biased composition (basic and acidic residues). Disordered stretches follow at residues 336 to 355 (EVSK…MSFE) and 361 to 384 (KETP…DTSR).

The protein belongs to the DNA mismatch repair MutL/HexB family.

This protein is involved in the repair of mismatches in DNA. It is required for dam-dependent methyl-directed DNA mismatch repair. May act as a 'molecular matchmaker', a protein that promotes the formation of a stable complex between two or more DNA-binding proteins in an ATP-dependent manner without itself being part of a final effector complex. This Listeria welshimeri serovar 6b (strain ATCC 35897 / DSM 20650 / CCUG 15529 / CIP 8149 / NCTC 11857 / SLCC 5334 / V8) protein is DNA mismatch repair protein MutL.